A 274-amino-acid chain; its full sequence is 2,3,4,5-tetrahydropyridine-2,6-dicarboxylate N-succinyltransferase (274 aa).

Arg105 and Asp142 together coordinate substrate.

This sequence belongs to the transferase hexapeptide repeat family. As to quaternary structure, homotrimer.

It is found in the cytoplasm. It catalyses the reaction (S)-2,3,4,5-tetrahydrodipicolinate + succinyl-CoA + H2O = (S)-2-succinylamino-6-oxoheptanedioate + CoA. It functions in the pathway amino-acid biosynthesis; L-lysine biosynthesis via DAP pathway; LL-2,6-diaminopimelate from (S)-tetrahydrodipicolinate (succinylase route): step 1/3. The protein is 2,3,4,5-tetrahydropyridine-2,6-dicarboxylate N-succinyltransferase of Methylobacillus flagellatus (strain ATCC 51484 / DSM 6875 / VKM B-1610 / KT).